The following is a 418-amino-acid chain: Glutamyl-tRNA reductase (418 aa).

Substrate contacts are provided by residues 49 to 52 (TCNR), Ser108, 113 to 115 (EPQ), and Gln119. Cys50 functions as the Nucleophile in the catalytic mechanism. 188 to 193 (GAGETI) contacts NADP(+).

It belongs to the glutamyl-tRNA reductase family. Homodimer.

The enzyme catalyses (S)-4-amino-5-oxopentanoate + tRNA(Glu) + NADP(+) = L-glutamyl-tRNA(Glu) + NADPH + H(+). Its pathway is porphyrin-containing compound metabolism; protoporphyrin-IX biosynthesis; 5-aminolevulinate from L-glutamyl-tRNA(Glu): step 1/2. Functionally, catalyzes the NADPH-dependent reduction of glutamyl-tRNA(Glu) to glutamate 1-semialdehyde (GSA). The sequence is that of Glutamyl-tRNA reductase from Aliivibrio fischeri (strain MJ11) (Vibrio fischeri).